The sequence spans 203 residues: Large ribosomal subunit protein uL22 (203 aa).

2 stretches are compositionally biased toward polar residues: residues 116–126 (QNGGESQNQEY) and 134–167 (VSKS…DSQL). A disordered region spans residues 116-203 (QNGGESQNQE…TVLAQEKEVK (88 aa)). Low complexity predominate over residues 168–194 (SAKTNSTTTAKKTDLADNNTKNDATNT).

It belongs to the universal ribosomal protein uL22 family. Part of the 50S ribosomal subunit.

Functionally, this protein binds specifically to 23S rRNA; its binding is stimulated by other ribosomal proteins, e.g. L4, L17, and L20. It is important during the early stages of 50S assembly. It makes multiple contacts with different domains of the 23S rRNA in the assembled 50S subunit and ribosome. The globular domain of the protein is located near the polypeptide exit tunnel on the outside of the subunit, while an extended beta-hairpin is found that lines the wall of the exit tunnel in the center of the 70S ribosome. The sequence is that of Large ribosomal subunit protein uL22 from Mesomycoplasma hyopneumoniae (strain 232) (Mycoplasma hyopneumoniae).